We begin with the raw amino-acid sequence, 137 residues long: Large ribosomal subunit protein uL22c (137 aa).

Belongs to the universal ribosomal protein uL22 family. As to quaternary structure, part of the 50S ribosomal subunit.

The protein resides in the plastid. Its subcellular location is the chloroplast. Its function is as follows. This protein binds specifically to 23S rRNA. The globular domain of the protein is located near the polypeptide exit tunnel on the outside of the subunit, while an extended beta-hairpin is found that lines the wall of the exit tunnel in the center of the 70S ribosome. This chain is Large ribosomal subunit protein uL22c (rpl22), found in Oenothera argillicola (Appalachian evening primrose).